The chain runs to 143 residues: Transcriptional regulator MraZ (143 aa).

SpoVT-AbrB domains are found at residues 5–47 (EYEH…PRGV) and 76–119 (AADM…SPRR).

The protein belongs to the MraZ family. As to quaternary structure, forms oligomers.

It is found in the cytoplasm. The protein localises to the nucleoid. This is Transcriptional regulator MraZ from Roseiflexus castenholzii (strain DSM 13941 / HLO8).